A 343-amino-acid polypeptide reads, in one-letter code: Low conductance mechanosensitive channel YnaI (343 aa).

Residues 1–9 lie on the Periplasmic side of the membrane; the sequence is MIAELFTNN. Residues 10-30 form a helical membrane-spanning segment; that stretch reads ALNLVIIFGSCAALILMSFWF. The Cytoplasmic segment spans residues 31–40; the sequence is RRGNRKRKGF. Residues 41 to 61 traverse the membrane as a helical segment; that stretch reads LFHAVQFLIYTIIISAVGSII. Over 62 to 77 the chain is Periplasmic; that stretch reads NYVIENYKLKFITPGV. The chain crosses the membrane as a helical span at residues 78 to 98; it reads IDFICTSLIAVILTIKLFLLI. Over 99-125 the chain is Cytoplasmic; the sequence is NQFEKQQIKKGRDITSARIMSRIIKIT. A helical transmembrane segment spans residues 126–146; it reads IIVVLVLLYGEHFGMSLSGLL. Position 147 (Thr-147) is a topological domain, periplasmic. Residues 148–168 traverse the membrane as a helical segment; that stretch reads FGGIGGLAVGMAGKDILSNFF. Residues 169-343 lie on the Cytoplasmic side of the membrane; it reads SGIMLYFDRP…DNITPPEQGR (175 aa).

This sequence belongs to the MscS (TC 1.A.23) family. Homoheptamer.

It localises to the cell inner membrane. Functionally, mechanosensitive channel that protects cells against hypoosmotic stress when highly overexpressed. This Escherichia coli (strain K12) protein is Low conductance mechanosensitive channel YnaI (ynaI).